Consider the following 267-residue polypeptide: Ribosomal RNA small subunit methyltransferase A (267 aa).

The S-adenosyl-L-methionine site is built by asparagine 18, leucine 20, glycine 45, glutamate 66, aspartate 91, and asparagine 112.

Belongs to the class I-like SAM-binding methyltransferase superfamily. rRNA adenine N(6)-methyltransferase family. RsmA subfamily.

The protein resides in the cytoplasm. It carries out the reaction adenosine(1518)/adenosine(1519) in 16S rRNA + 4 S-adenosyl-L-methionine = N(6)-dimethyladenosine(1518)/N(6)-dimethyladenosine(1519) in 16S rRNA + 4 S-adenosyl-L-homocysteine + 4 H(+). In terms of biological role, specifically dimethylates two adjacent adenosines (A1518 and A1519) in the loop of a conserved hairpin near the 3'-end of 16S rRNA in the 30S particle. May play a critical role in biogenesis of 30S subunits. The protein is Ribosomal RNA small subunit methyltransferase A of Shewanella woodyi (strain ATCC 51908 / MS32).